The primary structure comprises 268 residues: Tryptophan synthase alpha chain (268 aa).

Residues glutamate 49 and aspartate 60 each act as proton acceptor in the active site.

It belongs to the TrpA family. In terms of assembly, tetramer of two alpha and two beta chains.

It catalyses the reaction (1S,2R)-1-C-(indol-3-yl)glycerol 3-phosphate + L-serine = D-glyceraldehyde 3-phosphate + L-tryptophan + H2O. The protein operates within amino-acid biosynthesis; L-tryptophan biosynthesis; L-tryptophan from chorismate: step 5/5. Functionally, the alpha subunit is responsible for the aldol cleavage of indoleglycerol phosphate to indole and glyceraldehyde 3-phosphate. The protein is Tryptophan synthase alpha chain of Xylella fastidiosa (strain M23).